The sequence spans 490 residues: tRNA-guanine(15) transglycosylase (490 aa).

The active-site Nucleophile is Asp90. The substrate site is built by Asp125 and Ala193. Cys276, Cys278, and Cys281 together coordinate Zn(2+).

Belongs to the archaeosine tRNA-ribosyltransferase family. Zn(2+) serves as cofactor.

The catalysed reaction is guanosine(15) in tRNA + 7-cyano-7-deazaguanine = 7-cyano-7-carbaguanosine(15) in tRNA + guanine. It functions in the pathway tRNA modification; archaeosine-tRNA biosynthesis. Functionally, exchanges the guanine residue with 7-cyano-7-deazaguanine (preQ0) at position 15 in the dihydrouridine loop (D-loop) of archaeal tRNAs. The sequence is that of tRNA-guanine(15) transglycosylase from Methanosarcina mazei (strain ATCC BAA-159 / DSM 3647 / Goe1 / Go1 / JCM 11833 / OCM 88) (Methanosarcina frisia).